Here is a 325-residue protein sequence, read N- to C-terminus: tRNA dimethylallyltransferase (325 aa).

17–24 (GPTASGKT) contributes to the ATP binding site. 19–24 (TASGKT) provides a ligand contact to substrate. Interaction with substrate tRNA regions lie at residues 42-45 (DSAL), 166-170 (QRIQR), 251-256 (RCVGYR), and 284-291 (KRQITWLR).

It belongs to the IPP transferase family. Monomer. Requires Mg(2+) as cofactor.

The enzyme catalyses adenosine(37) in tRNA + dimethylallyl diphosphate = N(6)-dimethylallyladenosine(37) in tRNA + diphosphate. Catalyzes the transfer of a dimethylallyl group onto the adenine at position 37 in tRNAs that read codons beginning with uridine, leading to the formation of N6-(dimethylallyl)adenosine (i(6)A). This chain is tRNA dimethylallyltransferase, found in Burkholderia multivorans (strain ATCC 17616 / 249).